Here is a 117-residue protein sequence, read N- to C-terminus: Immunoglobulin kappa variable 1-12 (117 aa).

The N-terminal stretch at 1–22 (MDMRVPAQLLGLLLLWFPGSRC) is a signal peptide. The tract at residues 23–45 (DIQMTQSPSSVSASVGDRVTITC) is framework-1. Residues 24–117 (IQMTQSPSSV…YYCQQANSFP (94 aa)) form the Ig-like domain. Cys-45 and Cys-110 are oxidised to a cystine. A complementarity-determining-1 region spans residues 46–56 (RASQGISSWLA). The tract at residues 57 to 71 (WYQQKPGKAPKLLIY) is framework-2. The interval 72–78 (AASSLQS) is complementarity-determining-2. Positions 79–110 (GVPSRFSGSGSGTDFTLTISSLQPEDFATYYC) are framework-3. A complementarity-determining-3 region spans residues 111 to 117 (QQANSFP).

In terms of assembly, immunoglobulins are composed of two identical heavy chains and two identical light chains; disulfide-linked.

It is found in the secreted. The protein localises to the cell membrane. Functionally, v region of the variable domain of immunoglobulin light chains that participates in the antigen recognition. Immunoglobulins, also known as antibodies, are membrane-bound or secreted glycoproteins produced by B lymphocytes. In the recognition phase of humoral immunity, the membrane-bound immunoglobulins serve as receptors which, upon binding of a specific antigen, trigger the clonal expansion and differentiation of B lymphocytes into immunoglobulins-secreting plasma cells. Secreted immunoglobulins mediate the effector phase of humoral immunity, which results in the elimination of bound antigens. The antigen binding site is formed by the variable domain of one heavy chain, together with that of its associated light chain. Thus, each immunoglobulin has two antigen binding sites with remarkable affinity for a particular antigen. The variable domains are assembled by a process called V-(D)-J rearrangement and can then be subjected to somatic hypermutations which, after exposure to antigen and selection, allow affinity maturation for a particular antigen. The polypeptide is Immunoglobulin kappa variable 1-12 (Homo sapiens (Human)).